We begin with the raw amino-acid sequence, 273 residues long: Ribosomal RNA small subunit methyltransferase A (273 aa).

Residues Asn18, Leu20, Gly45, Glu66, Asp91, and Asn113 each contribute to the S-adenosyl-L-methionine site.

It belongs to the class I-like SAM-binding methyltransferase superfamily. rRNA adenine N(6)-methyltransferase family. RsmA subfamily.

The protein localises to the cytoplasm. The enzyme catalyses adenosine(1518)/adenosine(1519) in 16S rRNA + 4 S-adenosyl-L-methionine = N(6)-dimethyladenosine(1518)/N(6)-dimethyladenosine(1519) in 16S rRNA + 4 S-adenosyl-L-homocysteine + 4 H(+). Its function is as follows. Specifically dimethylates two adjacent adenosines (A1518 and A1519) in the loop of a conserved hairpin near the 3'-end of 16S rRNA in the 30S particle. May play a critical role in biogenesis of 30S subunits. This is Ribosomal RNA small subunit methyltransferase A from Klebsiella pneumoniae subsp. pneumoniae (strain ATCC 700721 / MGH 78578).